The chain runs to 165 residues: MTTPSPSDRVEIDVEVNGRRRTVAVDARETLADHLRNDQKLTGIKLGCEHGVCGACTILMDGAAVRSCLTLAAQGDGRSIRTVEDLSDGALSPLQEAFKRHHALQCGFCTAGFLMSATELLEANPSPTKEEVIEALSGNLCRCTGYQTIVEAVLDAPGQIGNKNG.

In terms of domain architecture, 2Fe-2S ferredoxin-type spans 10–86; sequence VEIDVEVNGR…GRSIRTVEDL (77 aa). Residues cysteine 48, cysteine 53, cysteine 56, and cysteine 68 each coordinate [2Fe-2S] cluster.

As to quaternary structure, heterotrimer composed of a large subunit (NdhL), a medium subunit (NdhM) and a small subunit (NdhS). The cofactor is [2Fe-2S] cluster.

It localises to the cytoplasm. It catalyses the reaction (R)-nicotine + A + H2O = (R)-6-hydroxynicotine + AH2. The catalysed reaction is (S)-nicotine + A + H2O = (S)-6-hydroxynicotine + AH2. It participates in alkaloid degradation; nicotine degradation; 6-hydroxypseudooxynicotine from nicotine (R-isomer route): step 1/2. Its pathway is alkaloid degradation; nicotine degradation; 6-hydroxypseudooxynicotine from nicotine (S-isomer route): step 1/2. Its activity is regulated as follows. Nicotine dehydrogenase activity is inhibited by tungsten. Component of the nicotine 6-hydroxylase, which is involved in the degradation of nicotine. Catalyzes the hydroxylation of the pyridine ring at C6 to form 6-hydroxynicotine. Can use both L-nicotine and D-nicotine. The sequence is that of Nicotine 6-hydroxylase small subunit from Paenarthrobacter nicotinovorans (Arthrobacter nicotinovorans).